Consider the following 296-residue polypeptide: NAD kinase (296 aa).

The active-site Proton acceptor is aspartate 78. NAD(+)-binding positions include 78-79 (DG), 152-153 (ND), arginine 180, aspartate 182, and glutamine 251.

It belongs to the NAD kinase family. The cofactor is a divalent metal cation.

Its subcellular location is the cytoplasm. It carries out the reaction NAD(+) + ATP = ADP + NADP(+) + H(+). In terms of biological role, involved in the regulation of the intracellular balance of NAD and NADP, and is a key enzyme in the biosynthesis of NADP. Catalyzes specifically the phosphorylation on 2'-hydroxyl of the adenosine moiety of NAD to yield NADP. This is NAD kinase from Neisseria gonorrhoeae (strain ATCC 700825 / FA 1090).